The primary structure comprises 215 residues: HTH-type transcriptional regulator AcrR (215 aa).

An HTH tetR-type domain is found at 10–70; it reads QETRQHILDV…EIWELSESNI (61 aa). The segment at residues 33 to 52 is a DNA-binding region (H-T-H motif); sequence SLGEIAKAAGVTRGAIYWHF.

Functionally, potential regulator protein for the acrAB genes. The polypeptide is HTH-type transcriptional regulator AcrR (acrR) (Shigella flexneri).